We begin with the raw amino-acid sequence, 420 residues long: Amino acid decarboxylase lolD1 (420 aa).

The residue at position 62 (lysine 62) is an N6-(pyridoxal phosphate)lysine. Pyridoxal 5'-phosphate is bound by residues serine 194, glycine 231, and 266 to 269; that span reads EPGT. Residue 315–316 participates in substrate binding; it reads IV. The Proton donor; shared with dimeric partner role is filled by cysteine 351. S-nitrosocysteine is present on cysteine 351. Residue aspartate 352 participates in substrate binding. Tyrosine 381 provides a ligand contact to pyridoxal 5'-phosphate.

This sequence belongs to the Orn/Lys/Arg decarboxylase class-II family. As to quaternary structure, homodimer. It depends on pyridoxal 5'-phosphate as a cofactor.

It participates in alkaloid biosynthesis. Its function is as follows. Amino acid decarboxylase; part of the gene cluster that mediates the biosynthesis of loline alkaloids, potent insecticidal agents composed of a pyrrolizidine ring system and an uncommon ether bridge linking carbons 2 and 7. Lolines are structurally differentiated by the various modifications of the L-amino group and include norloline, loline, N-methylloline, N-acetylloline, N-acetylnorloline, and N-formylloline. The first committed step is the condensation of O-acetyl-L-homoserine (derived from L-aspartic acid) and L-proline, probably catalyzed by the gamma-type pyridoxal 5'-phosphate(PLP)-dependent enzyme lolC, to give the diamino diacid, NACPP. Ensuing cyclization, decarboxylation, and acetylation steps yield 1-exo-acetamidopyrrolizidine (AcAP). LolO is required for installation of the ether bridge upon the pathway intermediate, 1-exo-acetamidopyrrolizidine (AcAP). In sequential 2-oxoglutarate- and O(2)-consuming steps, lolO removes hydrogens from C2 and C7 of AcAP to form both carbon-oxygen bonds in N-acetylnorloline (NANL), the precursor to all other lolines. The enzymes lolD, lolE, lolF and lolT have also been proposed to be involved in the ether-bridge installation. Further processing of the exocyclic moiety of NANL by fungal N-acetamidase (LolN), methyltransferase (LolM), and cytochrome P450 (LolP) enzymes, with occasional involvement of a plant acetyltransferase, generates the other known lolines. LolN transforms NANL to norlonine which is monomethylated and dimethylated to respectively lonine and N-methyllonine (NML) by lolM. LolP catalyzes hydroxylation of the methyl group in N-methylloline (NML) and further oxygenation to N-formylloline (NFL). A plant acetyltransferase is responsible for the acetylation of loline to form N-acetylloline (NAL). LolA might interact with aspartate kinase to prevent feedback inhibition of its activity by these end products and thereby promote production of L-homoserine from L-aspartate. In Epichloe uncinata (Endophyte fungus), this protein is Amino acid decarboxylase lolD1.